A 767-amino-acid polypeptide reads, in one-letter code: DNA topoisomerase 1 (767 aa).

Over residues 1 to 23 (MSGDHLHNDSQIEADFRLNDSHK) the composition is skewed to basic and acidic residues. The tract at residues 1-201 (MSGDHLHNDS…NKKKKPKKEE (201 aa)) is disordered. Serine 2 carries the N-acetylserine modification. Phosphoserine occurs at positions 2 and 10. Residues 24–39 (HKDKHKDREHRHKEHK) are compositionally biased toward basic residues. The span at 40–110 (KDKDKDREKS…DAKIKKEKEN (71 aa)) shows a compositional bias: basic and acidic residues. The residue at position 59 (serine 59) is a Phosphoserine. Residue lysine 103 forms a Glycyl lysine isopeptide (Lys-Gly) (interchain with G-Cter in SUMO2) linkage. Residue lysine 105 forms a Glycyl lysine isopeptide (Lys-Gly) (interchain with G-Cter in SUMO); alternate linkage. Lysine 105 is covalently cross-linked (Glycyl lysine isopeptide (Lys-Gly) (interchain with G-Cter in SUMO2); alternate). A Phosphoserine modification is found at serine 114. A Glycyl lysine isopeptide (Lys-Gly) (interchain with G-Cter in SUMO); alternate cross-link involves residue lysine 119. Residue lysine 119 forms a Glycyl lysine isopeptide (Lys-Gly) (interchain with G-Cter in SUMO2); alternate linkage. Lysine 119 is covalently cross-linked (Glycyl lysine isopeptide (Lys-Gly) (interchain with G-Cter in SUMO1); alternate). Positions 131-168 (PKEDIKPLKRLRDEDDADYKPKKIKTEDIKKEKKRKSE) are enriched in basic and acidic residues. Glycyl lysine isopeptide (Lys-Gly) (interchain with G-Cter in SUMO2) cross-links involve residues lysine 136 and lysine 150. A Glycyl lysine isopeptide (Lys-Gly) (interchain with G-Cter in SUMO); alternate cross-link involves residue lysine 155. Lysine 155 participates in a covalent cross-link: Glycyl lysine isopeptide (Lys-Gly) (interchain with G-Cter in SUMO2); alternate. Glycyl lysine isopeptide (Lys-Gly) (interchain with G-Cter in SUMO2) cross-links involve residues lysine 160 and lysine 166. Lysine 174 is covalently cross-linked (Glycyl lysine isopeptide (Lys-Gly) (interchain with G-Cter in SUMO2); alternate). N6-acetyllysine; alternate is present on lysine 174. A compositionally biased stretch (basic and acidic residues) spans 181 to 201 (KDKDKKVAEPDNKKKKPKKEE). Residue lysine 206 forms a Glycyl lysine isopeptide (Lys-Gly) (interchain with G-Cter in SUMO2) linkage. Lysine 282 carries the post-translational modification N6-acetyllysine. A Glycyl lysine isopeptide (Lys-Gly) (interchain with G-Cter in SUMO2) cross-link involves residue lysine 338. 2 interaction with DNA regions span residues 427 to 428 (KY) and 490 to 495 (RAGNEK). The Topo IB-type catalytic domain occupies 434-767 (SSRIKGEKDW…IDMTDEDYEF (334 aa)). A Phosphoserine; by CK2 modification is found at serine 508. Lysine 551 is covalently cross-linked (Glycyl lysine isopeptide (Lys-Gly) (interchain with G-Cter in SUMO2)). The interval 587–589 (TAK) is interaction with DNA. Glycyl lysine isopeptide (Lys-Gly) (interchain with G-Cter in SUMO2) cross-links involve residues lysine 644, lysine 702, and lysine 714. The active-site O-(3'-phospho-DNA)-tyrosine intermediate is tyrosine 725.

It belongs to the type IB topoisomerase family. Monomer. Interacts with ERCC6. Interacts with TPRN; TPRN interacts with a number of DNA damage response proteins, is recruited to sites of DNA damage and may play a role in DNA damage repair. In terms of processing, sumoylated. Lys-119 is the main site of sumoylation. Sumoylation plays a role in partitioning TOP1 between nucleoli and nucleoplasm. Levels are dramatically increased on camptothecin (CPT) treatment. Phosphorylation at Ser-508 by CK2 increases binding to supercoiled DNA and sensitivity to camptothecin.

Its subcellular location is the nucleus. It is found in the nucleolus. The protein localises to the nucleoplasm. The enzyme catalyses ATP-independent breakage of single-stranded DNA, followed by passage and rejoining.. Functionally, releases the supercoiling and torsional tension of DNA introduced during the DNA replication and transcription by transiently cleaving and rejoining one strand of the DNA duplex. Introduces a single-strand break via transesterification at a target site in duplex DNA. The scissile phosphodiester is attacked by the catalytic tyrosine of the enzyme, resulting in the formation of a DNA-(3'-phosphotyrosyl)-enzyme intermediate and the expulsion of a 5'-OH DNA strand. The free DNA strand then rotates around the intact phosphodiester bond on the opposing strand, thus removing DNA supercoils. Finally, in the religation step, the DNA 5'-OH attacks the covalent intermediate to expel the active-site tyrosine and restore the DNA phosphodiester backbone. Regulates the alternative splicing of tissue factor (F3) pre-mRNA in endothelial cells. Involved in the circadian transcription of the core circadian clock component BMAL1 by altering the chromatin structure around the ROR response elements (ROREs) on the BMAL1 promoter. In Mus musculus (Mouse), this protein is DNA topoisomerase 1 (Top1).